The following is a 122-amino-acid chain: Small ribosomal subunit protein uS13 (122 aa).

The interval 96-122 (PVRGQRTRTNARTRKGPKKTVGVRRAK) is disordered.

The protein belongs to the universal ribosomal protein uS13 family. In terms of assembly, part of the 30S ribosomal subunit. Forms a loose heterodimer with protein S19. Forms two bridges to the 50S subunit in the 70S ribosome.

Functionally, located at the top of the head of the 30S subunit, it contacts several helices of the 16S rRNA. In the 70S ribosome it contacts the 23S rRNA (bridge B1a) and protein L5 of the 50S subunit (bridge B1b), connecting the 2 subunits; these bridges are implicated in subunit movement. Contacts the tRNAs in the A and P-sites. In Halothermothrix orenii (strain H 168 / OCM 544 / DSM 9562), this protein is Small ribosomal subunit protein uS13.